The chain runs to 418 residues: RapA guanosine triphosphatase-activating protein B (418 aa).

The region spanning 142–407 (LVKVCEPEFN…EKASALINVI (266 aa)) is the Rap-GAP domain. The tract at residues 304 to 339 (NRVVGEQPSPSLTTTTTTTTTTSPTINSNSPTPSNK) is disordered. Residues 311-338 (PSPSLTTTTTTTTTTSPTINSNSPTPSN) show a composition bias toward low complexity.

Functionally, mediates the deactivation of rap1 during multicellular development and is required for normal morphogenesis. Also required for the correct patterning of specific subtypes of prestalk cells. The polypeptide is RapA guanosine triphosphatase-activating protein B (rapgapB) (Dictyostelium discoideum (Social amoeba)).